Here is a 107-residue protein sequence, read N- to C-terminus: Homeobox protein HD-7 (107 aa).

Positions 21-80 form a DNA-binding region, homeobox; that stretch reads KPGEKVRKSEFQKEVLKKVYQATPYPTWENKIDIGILISLSPRAVDIWFQNKRHINKGKN.

The protein resides in the nucleus. The chain is Homeobox protein HD-7 (HD-7) from Encephalitozoon cuniculi (strain GB-M1) (Microsporidian parasite).